The sequence spans 117 residues: Transcription elongation factor SPT4 (117 aa).

The interaction with SUPT5H stretch occupies residues 1 to 40; that stretch reads MALETVPKDLRHLRACLLCSLVKTIDQFEYDGCDNCDAYL. A C4-type zinc finger spans residues 16–36; sequence CLLCSLVKTIDQFEYDGCDNC.

This sequence belongs to the SPT4 family. Interacts with SUPT5H to form the DSIF complex. DSIF interacts with RNA polymerase II and with the positive transcription elongation factor b complex (P-TEFb complex), which is composed of CDK9 and cyclin-T.

Its subcellular location is the nucleus. In terms of biological role, may function as a component of the DRB sensitivity-inducing factor complex (DSIF complex), which regulates transcription elongation by RNA polymerase II. Probably enhances transcriptional pausing at sites proximal to the promoter, which may in turn facilitate the assembly of an elongation competent RNA polymerase II complex. This chain is Transcription elongation factor SPT4 (supt4h1), found in Xenopus laevis (African clawed frog).